A 401-amino-acid polypeptide reads, in one-letter code: tRNA pseudouridine synthase Pus10 (401 aa).

One can recognise a THUMP domain in the interval 64–195; the sequence is ALAKSGHRES…DGSVSVEVMP (132 aa).

The protein belongs to the pseudouridine synthase Pus10 family.

The enzyme catalyses uridine(54) in tRNA = pseudouridine(54) in tRNA. It carries out the reaction uridine(55) in tRNA = pseudouridine(55) in tRNA. Functionally, responsible for synthesis of pseudouridine from uracil-54 and uracil-55 in the psi GC loop of transfer RNAs. This Caldivirga maquilingensis (strain ATCC 700844 / DSM 13496 / JCM 10307 / IC-167) protein is tRNA pseudouridine synthase Pus10.